Here is a 504-residue protein sequence, read N- to C-terminus: ATP synthase subunit beta (504 aa).

Positions 1 to 23 (MAKAATPKETAAAKKPAAPKKAA) are disordered. 182-189 (GGAGVGKT) serves as a coordination point for ATP.

This sequence belongs to the ATPase alpha/beta chains family. In terms of assembly, F-type ATPases have 2 components, CF(1) - the catalytic core - and CF(0) - the membrane proton channel. CF(1) has five subunits: alpha(3), beta(3), gamma(1), delta(1), epsilon(1). CF(0) has three main subunits: a(1), b(2) and c(9-12). The alpha and beta chains form an alternating ring which encloses part of the gamma chain. CF(1) is attached to CF(0) by a central stalk formed by the gamma and epsilon chains, while a peripheral stalk is formed by the delta and b chains.

The protein localises to the cell inner membrane. The catalysed reaction is ATP + H2O + 4 H(+)(in) = ADP + phosphate + 5 H(+)(out). Functionally, produces ATP from ADP in the presence of a proton gradient across the membrane. The catalytic sites are hosted primarily by the beta subunits. The protein is ATP synthase subunit beta of Rhizobium meliloti (strain 1021) (Ensifer meliloti).